Consider the following 311-residue polypeptide: Protoheme IX farnesyltransferase (311 aa).

8 helical membrane passes run 19-39, 55-75, 101-121, 123-143, 169-189, 221-241, 242-262, and 290-310; these read VLAY…VATI, ILAT…LNCV, NAFV…WWQA, LLSG…YTLG, AVTG…FFWT, VTKQ…ALVP, ATGV…LLMA, and VVFC…GSFF.

It belongs to the UbiA prenyltransferase family. Protoheme IX farnesyltransferase subfamily.

It is found in the cell membrane. It carries out the reaction heme b + (2E,6E)-farnesyl diphosphate + H2O = Fe(II)-heme o + diphosphate. It functions in the pathway porphyrin-containing compound metabolism; heme O biosynthesis; heme O from protoheme: step 1/1. Its function is as follows. Converts heme B (protoheme IX) to heme O by substitution of the vinyl group on carbon 2 of heme B porphyrin ring with a hydroxyethyl farnesyl side group. In Nocardia farcinica (strain IFM 10152), this protein is Protoheme IX farnesyltransferase.